Here is a 257-residue protein sequence, read N- to C-terminus: 1-(5-phosphoribosyl)-5-[(5-phosphoribosylamino)methylideneamino] imidazole-4-carboxamide isomerase (257 aa).

The Proton acceptor role is filled by Asp8. Asp131 serves as the catalytic Proton donor.

Belongs to the HisA/HisF family.

The protein localises to the cytoplasm. It carries out the reaction 1-(5-phospho-beta-D-ribosyl)-5-[(5-phospho-beta-D-ribosylamino)methylideneamino]imidazole-4-carboxamide = 5-[(5-phospho-1-deoxy-D-ribulos-1-ylimino)methylamino]-1-(5-phospho-beta-D-ribosyl)imidazole-4-carboxamide. It participates in amino-acid biosynthesis; L-histidine biosynthesis; L-histidine from 5-phospho-alpha-D-ribose 1-diphosphate: step 4/9. The sequence is that of 1-(5-phosphoribosyl)-5-[(5-phosphoribosylamino)methylideneamino] imidazole-4-carboxamide isomerase from Nitrosospira multiformis (strain ATCC 25196 / NCIMB 11849 / C 71).